A 516-amino-acid chain; its full sequence is Squalene epoxidase 5 (516 aa).

2 consecutive transmembrane segments (helical) span residues 3–23 (FTNVCLWTLLAFMLTWTVFYV) and 45–65 (ATDVIIVGAGVGGSALAYALA). FAD is bound by residues 55–56 (VG), 75–76 (ER), arginine 83, phenylalanine 88, arginine 156, valine 172, aspartate 335, and methionine 348. The chain crosses the membrane as a helical span at residues 446-466 (LIYHLCAITLSSIGHLLSPFP).

This sequence belongs to the squalene monooxygenase family. It depends on FAD as a cofactor. As to expression, expressed in seedlings, leaves, stems and inflorescences. Detected in siliques.

Its subcellular location is the membrane. It carries out the reaction squalene + reduced [NADPH--hemoprotein reductase] + O2 = (S)-2,3-epoxysqualene + oxidized [NADPH--hemoprotein reductase] + H2O + H(+). Its pathway is terpene metabolism; lanosterol biosynthesis; lanosterol from farnesyl diphosphate: step 2/3. Its function is as follows. Catalyzes the stereospecific oxidation of squalene to (S)-2,3-epoxysqualene, and is considered to be a rate-limiting enzyme in steroid biosynthesis. In Arabidopsis thaliana (Mouse-ear cress), this protein is Squalene epoxidase 5 (SQE5).